A 145-amino-acid chain; its full sequence is D-aminoacyl-tRNA deacylase (145 aa).

The Gly-cisPro motif, important for rejection of L-amino acids signature appears at Gly133–Pro134.

This sequence belongs to the DTD family. In terms of assembly, homodimer.

It is found in the cytoplasm. The catalysed reaction is glycyl-tRNA(Ala) + H2O = tRNA(Ala) + glycine + H(+). It carries out the reaction a D-aminoacyl-tRNA + H2O = a tRNA + a D-alpha-amino acid + H(+). Its function is as follows. An aminoacyl-tRNA editing enzyme that deacylates mischarged D-aminoacyl-tRNAs. Also deacylates mischarged glycyl-tRNA(Ala), protecting cells against glycine mischarging by AlaRS. Acts via tRNA-based rather than protein-based catalysis; rejects L-amino acids rather than detecting D-amino acids in the active site. By recycling D-aminoacyl-tRNA to D-amino acids and free tRNA molecules, this enzyme counteracts the toxicity associated with the formation of D-aminoacyl-tRNA entities in vivo and helps enforce protein L-homochirality. This chain is D-aminoacyl-tRNA deacylase, found in Cutibacterium acnes (strain DSM 16379 / KPA171202) (Propionibacterium acnes).